Consider the following 633-residue polypeptide: Carbon catabolite-derepressing protein kinase (633 aa).

Low complexity predominate over residues 1–16 (MSSNNNTNTAPANANS). The segment at 1–46 (MSSNNNTNTAPANANSSHHHHHHHHHHHHHGHGGSNSTLNNPKSSL) is disordered. The span at 17-32 (SHHHHHHHHHHHHHGH) shows a compositional bias: basic residues. Positions 55–306 (YQIVKTLGEG…IHEIMQDDWF (252 aa)) constitute a Protein kinase domain. ATP is bound by residues 61 to 69 (LGEGSFGKV) and K84. D177 serves as the catalytic Proton acceptor. T210 bears the Phosphothreonine; by autocatalysis mark. Positions 313-392 (YLLPPDLKPH…YMLIKENKSL (80 aa)) are auto-inhibitory domain (AID). The segment at 317–345 (PDLKPHPEEENENNDSKKDGSSPDNDEID) is disordered. Basic and acidic residues predominate over residues 319–337 (LKPHPEEENENNDSKKDGS). The 42-residue stretch at 348 to 389 (LVNILSSTMGYEKDEIYESLESSEDTPAFNEIRDAYMLIKEN) folds into the UBA domain. Residues 409 to 434 (FLSQSPPTFQQQSKSHQKSQVDHETA) form a disordered region. Phosphoserine is present on S413. Residue K461 forms a Glycyl lysine isopeptide (Lys-Gly) (interchain with G-Cter in ubiquitin) linkage. At S487 the chain carries Phosphoserine. K549 participates in a covalent cross-link: Glycyl lysine isopeptide (Lys-Gly) (interchain with G-Cter in SUMO). At S632 the chain carries Phosphoserine.

It belongs to the protein kinase superfamily. CAMK Ser/Thr protein kinase family. SNF1 subfamily. Component of the AMP-activated protein kinase complex also known as the SNF1 kinase complex (Snf1c), a heterotrimeric complex composed of an alpha subunit (SNF1), a regulatory subunit beta (GAL83 and substoichiometric alternate beta subunits SIP1 and SIP2), and a regulatory subunit gamma (SNF4). Interacts with the transcriptional activator SIP4. Interacts with SAK1. Interacts with CTK1: Interacts with adenylate cyclase CYR1. In terms of processing, phosphorylation at Thr-210 in response to glucose limitation leads to activation of kinase activity. ADP, but not AMP, protects the enzyme from dephosphorylation at Thr-210 by GLC7. Sumoylation by the SUMO (E3) ligase MMS21 leads to inhibition by interaction of SUMO attached to Lys-549 with a SUMO-interacting sequence motif located near the active site of SNF1, and by targeting SNF1 for glucose-induced destruction via the SLX5-SLX8 (SUMO-directed) ubiquitin ligase.

It localises to the cytoplasm. It is found in the nucleus. The protein resides in the nucleus membrane. The catalysed reaction is L-seryl-[protein] + ATP = O-phospho-L-seryl-[protein] + ADP + H(+). It carries out the reaction L-threonyl-[protein] + ATP = O-phospho-L-threonyl-[protein] + ADP + H(+). The kinase activity is positively regulated by SNF4 via sequestration of the SNF1 auto-inhibitory domain (AID). Its function is as follows. Serine/threonine protein kinase essential for release from glucose repression. Catalytic subunit of the AMP-activated protein kinase complex also known as the SNF1 kinase complex (Snf1c), a central regulator of cellular energy homeostasis, which, in response to a fall in intracellular ATP levels, activates energy-producing pathways and inhibits energy-consuming processes. The complex phosphorylates histone H3 to form H3S10ph, which promotes H3K14ac formation, leading to transcriptional activation through TBP recruitment to the promoters. The complex also negatively regulates the HOG1 MAPK pathway in ER stress response including unfolded protein response (UPR). Under nutrient/energy depletion, the complex phosphorylates and activates PAS kinase PSK1 which in turn activates PBS1, leading to the inhibition of the TORC1 signaling pathway. SNF1 also interacts and phosphorylates adenylate cyclase CYR1 and negatively regulates the protein kinase A signaling pathway. Also phosphorylates and regulates the transcriptional activator CAT8. The chain is Carbon catabolite-derepressing protein kinase from Saccharomyces cerevisiae (strain ATCC 204508 / S288c) (Baker's yeast).